We begin with the raw amino-acid sequence, 782 residues long: Protein phosphatase 1 regulatory subunit 12C (782 aa).

2 stretches are compositionally biased toward low complexity: residues 1–19 and 77–88; these read MSGE…AAAA and DPGPGSGAASDP. 2 disordered regions span residues 1–45 and 77–98; these read MSGE…GERR and DPGP…RAVL. An N-acetylserine modification is found at S2. ANK repeat units follow at residues 104–133, 137–166, 230–259, and 263–292; these read DGIS…TVNQ, EGWT…NIAA, TGAS…DTEL, and DGWT…GMDS. Residues 301–332 are a coiled coil; that stretch reads CDLADEDVMNLLEELAQKQEDLRNQKEGSQGR. Residues 321–685 are disordered; the sequence is DLRNQKEGSQ…HEEPDGGFRK (365 aa). The segment covering 332–341 has biased composition (polar residues); the sequence is RGQESQVPSS. Basic and acidic residues predominate over residues 353–369; it reads SSREKISLQDLSKERRP. Low complexity predominate over residues 401–413; that stretch reads VSSPVSSNPKSPV. A phosphoserine mark is found at S403, S411, S431, S454, and S509. The segment covering 451-465 has biased composition (polar residues); sequence RSASSSLLEKASTQA. The span at 537-546 shows a compositional bias: basic and acidic residues; it reads VRDEESESQR. Basic residues predominate over residues 547 to 557; that stretch reads KARSRLMRQSR. The residue at position 560 (T560) is a Phosphothreonine. Position 647 is a phosphoserine (S647). Basic and acidic residues predominate over residues 664 to 685; it reads SQRDLVLESKQEHEEPDGGFRK. Positions 681–782 form a coiled coil; sequence GGFRKMYTEL…LIRVISKLSK (102 aa).

In terms of assembly, PP1 comprises a catalytic subunit, PPP1CA, PPP1CB or PPP1CC, and one or several targeting or regulatory subunits. PPP1R12C mediates binding to myosin. Interacts via its N-terminus with PPP1CB. Interacts with IL16. Interacts with the coiled-coil domain of MPRIP. Interacts with NOD2. In terms of processing, phosphorylation at Thr-560 is essential for its interaction with PPP1CB.

The protein resides in the cytoplasm. It localises to the cytoskeleton. Its subcellular location is the stress fiber. Its function is as follows. Regulates myosin phosphatase activity. The chain is Protein phosphatase 1 regulatory subunit 12C from Mus musculus (Mouse).